A 236-amino-acid polypeptide reads, in one-letter code: MNTTPDLPTPRALRELTPLEARILGVLVEKQHTVPDTYPLSLNALTAGCNQKTARSPVMSVSEDEVTAALDGLKHLSLVMEGSSSRVPRFEHNMNRVLGIPSQAIALLTILLLRGPQTAAELRLNSARLHGFADISSVEAFLDELAARAQPLVVRLPRAPGARENRWMHLMCGDVNLADFAGSDAGGGADSVPPSEFEALKAEQKRLVDEVARLNALVQRMATELGIDVDAPGDAG.

It belongs to the UPF0502 family.

The sequence is that of UPF0502 protein Bcep1808_3727 from Burkholderia vietnamiensis (strain G4 / LMG 22486) (Burkholderia cepacia (strain R1808)).